The chain runs to 38 residues: Potassium channel toxin alpha-KTx 3.17 (38 aa).

Intrachain disulfides connect Cys-8/Cys-28, Cys-14/Cys-33, and Cys-18/Cys-35.

The protein belongs to the short scorpion toxin superfamily. Potassium channel inhibitor family. Alpha-KTx 03 subfamily. In terms of tissue distribution, expressed by the venom gland.

Its subcellular location is the secreted. Its function is as follows. Completely inhibits the (125)I-kaliotoxin binding on rat brain synaptosomes with high-affinity (IC(50)=0.1 nM). Is a potent Kv1.3/KCNA3 ligand. The chain is Potassium channel toxin alpha-KTx 3.17 from Buthus paris (Scorpion).